The following is a 257-amino-acid chain: S-methyl-5'-thioadenosine phosphorylase (257 aa).

Phosphate-binding positions include serine 10, 50–51 (RH), and 83–84 (TA). Methionine 180 serves as a coordination point for substrate. Threonine 181 lines the phosphate pocket. 204–206 (DYD) is a binding site for substrate.

This sequence belongs to the PNP/MTAP phosphorylase family. MTAP subfamily. In terms of assembly, homohexamer. Dimer of a homotrimer.

It carries out the reaction S-methyl-5'-thioadenosine + phosphate = 5-(methylsulfanyl)-alpha-D-ribose 1-phosphate + adenine. It catalyses the reaction adenosine + phosphate = alpha-D-ribose 1-phosphate + adenine. The protein operates within amino-acid biosynthesis; L-methionine biosynthesis via salvage pathway; S-methyl-5-thio-alpha-D-ribose 1-phosphate from S-methyl-5'-thioadenosine (phosphorylase route): step 1/1. Catalyzes the reversible phosphorylation of S-methyl-5'-thioadenosine (MTA) to adenine and 5-methylthioribose-1-phosphate. Involved in the breakdown of MTA, a major by-product of polyamine biosynthesis. Responsible for the first step in the methionine salvage pathway after MTA has been generated from S-adenosylmethionine. Has broad substrate specificity with 6-aminopurine nucleosides as preferred substrates. Can also use adenosine as substrate to form ribose 1-phosphate. This is S-methyl-5'-thioadenosine phosphorylase from Thermococcus kodakarensis (strain ATCC BAA-918 / JCM 12380 / KOD1) (Pyrococcus kodakaraensis (strain KOD1)).